We begin with the raw amino-acid sequence, 436 residues long: Retinoic acid receptor RXR (436 aa).

The tract at residues 1-108 is disordered; it reads MDRSEGMDTL…GPSPSPGLPH (108 aa). The tract at residues 1-116 is modulating; the sequence is MDRSEGMDTL…PHSSLHTKHI (116 aa). Positions 13-22 are enriched in low complexity; sequence SMPSGMSMGM. Polar residues-rich tracts occupy residues 40 to 49 and 62 to 76; these read SSLTSPTSTH and MASS…QQMH. Residues 85-98 are compositionally biased toward low complexity; the sequence is SSMGSPPMLCLSPS. 2 NR C4-type zinc fingers span residues 117–137 and 153–172; these read CAIC…CEGC and CRDD…CQYC. The segment at residues 117 to 182 is a DNA-binding region (nuclear receptor); that stretch reads CAICGDRASG…RYMKCLSMGM (66 aa). The hinge stretch occupies residues 183-206; sequence KREAVQEERQRVKEKGDGEVESTS. The span at 189–200 shows a compositional bias: basic and acidic residues; that stretch reads EERQRVKEKGDG. The disordered stretch occupies residues 189–209; sequence EERQRVKEKGDGEVESTSGAN. An NR LBD domain is found at 209–432; the sequence is NNDMPVEQIL…TFLMEMLENP (224 aa). 9-cis-retinoate-binding residues include Arg-290 and Ala-301.

It belongs to the nuclear hormone receptor family. NR2 subfamily. In terms of assembly, homodimer (via ligand-binding domain). Heterodimer. Homotetramer consisting of 2 canonical homodimers. Within the tetramer, each monomer binds one molecule of 9C-RA and a NCOA1-derived peptide containing an L-X(2)-L-L motif.

It is found in the nucleus. Functionally, ligand-dependent transcription factor probably involved in the retinoic acid response pathway. Binds 9-cis-retinoic acid (9C-RA) and, to a lesser extent, docosahexaenoic acid (DHA), phytanic acid, methoprene acid and oleic acid. Binds to double-stranded DNA sequences containing direct repeats (DR) with the consensus sequence 5'-[AG]GGTCA-3' and 1, 2, 3, 4 or 5 nucleotides in between (DR1, DR2, DR3. DR4 and DR5, respectively). Binding to DR1 is strongest. Transactivates gene expression when 9C-RA or DHA is bound. In Biomphalaria glabrata (Bloodfluke planorb), this protein is Retinoic acid receptor RXR.